A 214-amino-acid polypeptide reads, in one-letter code: ATP phosphoribosyltransferase (214 aa).

The protein belongs to the ATP phosphoribosyltransferase family. Short subfamily. Heteromultimer composed of HisG and HisZ subunits.

The protein resides in the cytoplasm. The enzyme catalyses 1-(5-phospho-beta-D-ribosyl)-ATP + diphosphate = 5-phospho-alpha-D-ribose 1-diphosphate + ATP. It functions in the pathway amino-acid biosynthesis; L-histidine biosynthesis; L-histidine from 5-phospho-alpha-D-ribose 1-diphosphate: step 1/9. Its function is as follows. Catalyzes the condensation of ATP and 5-phosphoribose 1-diphosphate to form N'-(5'-phosphoribosyl)-ATP (PR-ATP). Has a crucial role in the pathway because the rate of histidine biosynthesis seems to be controlled primarily by regulation of HisG enzymatic activity. This chain is ATP phosphoribosyltransferase, found in Ruminiclostridium cellulolyticum (strain ATCC 35319 / DSM 5812 / JCM 6584 / H10) (Clostridium cellulolyticum).